Reading from the N-terminus, the 170-residue chain is CDP-archaeol synthase (170 aa).

A run of 5 helical transmembrane segments spans residues 9 to 29 (AFWYILPAYFANSSPVVLGGG), 53 to 73 (GFFGGLIVGTIIGIVQYFLLP), 79 to 99 (LGIAIELAFLLSLGTLVGDLI), 114 to 134 (PAVGLDQWGFLIAALCFAYPV), and 140 to 160 (GEVLFLLVITPLIHWGANIFA).

Belongs to the CDP-archaeol synthase family. Requires Mg(2+) as cofactor.

It is found in the cell membrane. The catalysed reaction is 2,3-bis-O-(geranylgeranyl)-sn-glycerol 1-phosphate + CTP + H(+) = CDP-2,3-bis-O-(geranylgeranyl)-sn-glycerol + diphosphate. It functions in the pathway membrane lipid metabolism; glycerophospholipid metabolism. Catalyzes the formation of CDP-2,3-bis-(O-geranylgeranyl)-sn-glycerol (CDP-archaeol) from 2,3-bis-(O-geranylgeranyl)-sn-glycerol 1-phosphate (DGGGP) and CTP. This reaction is the third ether-bond-formation step in the biosynthesis of archaeal membrane lipids. In Pyrococcus horikoshii (strain ATCC 700860 / DSM 12428 / JCM 9974 / NBRC 100139 / OT-3), this protein is CDP-archaeol synthase.